The chain runs to 185 residues: Ribosome-recycling factor (185 aa).

Belongs to the RRF family.

Its subcellular location is the cytoplasm. Functionally, responsible for the release of ribosomes from messenger RNA at the termination of protein biosynthesis. May increase the efficiency of translation by recycling ribosomes from one round of translation to another. This Xanthomonas euvesicatoria pv. vesicatoria (strain 85-10) (Xanthomonas campestris pv. vesicatoria) protein is Ribosome-recycling factor.